The sequence spans 145 residues: 3-hydroxyacyl-[acyl-carrier-protein] dehydratase FabZ (145 aa).

Residue His47 is part of the active site.

This sequence belongs to the thioester dehydratase family. FabZ subfamily.

Its subcellular location is the cytoplasm. The enzyme catalyses a (3R)-hydroxyacyl-[ACP] = a (2E)-enoyl-[ACP] + H2O. Functionally, involved in unsaturated fatty acids biosynthesis. Catalyzes the dehydration of short chain beta-hydroxyacyl-ACPs and long chain saturated and unsaturated beta-hydroxyacyl-ACPs. The chain is 3-hydroxyacyl-[acyl-carrier-protein] dehydratase FabZ from Ruthia magnifica subsp. Calyptogena magnifica.